A 526-amino-acid polypeptide reads, in one-letter code: Vitamin B6 transporter bsu1 (526 aa).

Residues 1–53 (MASKIASLFSPSETASKDQHENVAEDLELGTASSQSDGIHETNSEYDEKKREE) form a disordered region. A compositionally biased stretch (basic and acidic residues) spans 38–53 (GIHETNSEYDEKKREE). Helical transmembrane passes span 81-101 (WSIV…SNGF), 118-138 (VATL…MFLG), 147-167 (KPVY…CALP), 173-192 (MIIS…TNVA), 204-224 (AGVP…GAPM), 238-257 (WLYY…ILII), 314-330 (LYNF…LTAI), 349-366 (YLSG…QPIQ), 387-407 (FTSA…FAFT), 413-432 (PWMS…GHNW), 444-461 (PLLS…SFIG), and 480-501 (WAVA…TFYF).

The protein belongs to the major facilitator superfamily. CAR1 family.

The protein localises to the membrane. Functionally, thiamine-regulated, high affinity import carrier of pyridoxine, pyridoxal and pyridoxamine. Also imports, but does not export, amiloride and so confers sensitivity. The chain is Vitamin B6 transporter bsu1 (bsu1) from Schizosaccharomyces pombe (strain 972 / ATCC 24843) (Fission yeast).